The primary structure comprises 158 residues: SsrA-binding protein (158 aa).

It belongs to the SmpB family.

The protein resides in the cytoplasm. In terms of biological role, required for rescue of stalled ribosomes mediated by trans-translation. Binds to transfer-messenger RNA (tmRNA), required for stable association of tmRNA with ribosomes. tmRNA and SmpB together mimic tRNA shape, replacing the anticodon stem-loop with SmpB. tmRNA is encoded by the ssrA gene; the 2 termini fold to resemble tRNA(Ala) and it encodes a 'tag peptide', a short internal open reading frame. During trans-translation Ala-aminoacylated tmRNA acts like a tRNA, entering the A-site of stalled ribosomes, displacing the stalled mRNA. The ribosome then switches to translate the ORF on the tmRNA; the nascent peptide is terminated with the 'tag peptide' encoded by the tmRNA and targeted for degradation. The ribosome is freed to recommence translation, which seems to be the essential function of trans-translation. In Caldanaerobacter subterraneus subsp. tengcongensis (strain DSM 15242 / JCM 11007 / NBRC 100824 / MB4) (Thermoanaerobacter tengcongensis), this protein is SsrA-binding protein.